The primary structure comprises 484 residues: Ubiquinone biosynthesis monooxygenase COQ6, mitochondrial (484 aa).

A mitochondrion-targeting transit peptide spans 1–41 (MLSLAKAKLAVVGIGRQCVAVRTLNGARAVHRSFSSSEHDQ).

It belongs to the UbiH/COQ6 family. As to quaternary structure, component of a multi-subunit COQ enzyme complex, composed of at least coq3, coq4, coq5, coq6, coq7 and coq9. Interacts with coq8b and coq7. Requires FAD as cofactor.

The protein resides in the mitochondrion inner membrane. It localises to the golgi apparatus. The protein localises to the cell projection. It catalyses the reaction a 4-hydroxy-3-(all-trans-polyprenyl)benzoate + 2 reduced [2Fe-2S]-[ferredoxin] + O2 + 2 H(+) = a 3,4-dihydroxy-5-(all-trans-polyprenyl)benzoate + 2 oxidized [2Fe-2S]-[ferredoxin] + H2O. The catalysed reaction is a 2-methoxy-6-(all-trans-polyprenyl)phenol + 2 reduced [2Fe-2S]-[ferredoxin] + O2 + 2 H(+) = a 2-methoxy-6-(all-trans-polyprenyl)benzene-1,4-diol + 2 oxidized [2Fe-2S]-[ferredoxin] + H2O. It functions in the pathway cofactor biosynthesis; ubiquinone biosynthesis. Functionally, FAD-dependent monooxygenase required for two non-consecutive steps during ubiquinone biosynthesis. Required for the C5-ring hydroxylation during ubiquinone biosynthesis by catalyzing the hydroxylation of 4-hydroxy-3-(all-trans-polyprenyl)benzoic acid to 3,4-dihydroxy-5-(all-trans-polyprenyl)benzoic acid. Also acts downstream of coq4, for the C1-hydroxylation during ubiquinone biosynthesis by catalyzing the hydroxylation of 2-methoxy-6-(all-trans-polyprenyl)phenol to 2-methoxy-6-(all-trans-polyprenyl)benzene-1,4-diol. The electrons required for the hydroxylation reaction are funneled indirectly to coq6 from NADPH via a ferredoxin/ferredoxin reductase system. In Danio rerio (Zebrafish), this protein is Ubiquinone biosynthesis monooxygenase COQ6, mitochondrial.